Reading from the N-terminus, the 251-residue chain is Pyridoxine 5'-phosphate synthase (251 aa).

Asn7 serves as a coordination point for 3-amino-2-oxopropyl phosphate. A 1-deoxy-D-xylulose 5-phosphate-binding site is contributed by Asp9–His10. Position 18 (Arg18) interacts with 3-amino-2-oxopropyl phosphate. His43 serves as the catalytic Proton acceptor. Residues Arg45 and His50 each contribute to the 1-deoxy-D-xylulose 5-phosphate site. The active-site Proton acceptor is Glu70. Residue Thr100 coordinates 1-deoxy-D-xylulose 5-phosphate. Catalysis depends on His198, which acts as the Proton donor. 3-amino-2-oxopropyl phosphate-binding positions include Ala199 and Gly220–His221.

Belongs to the PNP synthase family. In terms of assembly, homooctamer; tetramer of dimers.

Its subcellular location is the cytoplasm. It catalyses the reaction 3-amino-2-oxopropyl phosphate + 1-deoxy-D-xylulose 5-phosphate = pyridoxine 5'-phosphate + phosphate + 2 H2O + H(+). It functions in the pathway cofactor biosynthesis; pyridoxine 5'-phosphate biosynthesis; pyridoxine 5'-phosphate from D-erythrose 4-phosphate: step 5/5. Functionally, catalyzes the complicated ring closure reaction between the two acyclic compounds 1-deoxy-D-xylulose-5-phosphate (DXP) and 3-amino-2-oxopropyl phosphate (1-amino-acetone-3-phosphate or AAP) to form pyridoxine 5'-phosphate (PNP) and inorganic phosphate. This Aromatoleum aromaticum (strain DSM 19018 / LMG 30748 / EbN1) (Azoarcus sp. (strain EbN1)) protein is Pyridoxine 5'-phosphate synthase.